Reading from the N-terminus, the 289-residue chain is MAKWLGAPLARGVSTATRAKDSDRQDACRILDDALRDGELSMEEHRERVSAATKAVTLGDLQRLVADLQVESAPAQMPALKSRAKRTELGLLAAAFVASVLLGVGIGWGVYGNTRSPLDFTSDPGAKPDGIAPVVLTPPRQLHSLGGLTGLLEQTRKRFGDTMGYRLVIYPEYASLDRVDPADDRRVLAYTYRGGWGDATSSAKSIADVSVVDLSKFDAKTAVGIMRGAPETLGLKQSDVKSMYLIVEPVKDPTTPAALSLSLYVSSDYGGGYLVFAGDGTIKHVSYPS.

Positions 1-19 (MAKWLGAPLARGVSTATRA) are cleaved as a signal peptide. Helical transmembrane passes span 90-110 (GLLAAAFVASVLLGVGIGWGV) and 257-277 (AALSLSLYVSSDYGGGYLVFA).

The protein localises to the cell membrane. This is an uncharacterized protein from Mycobacterium tuberculosis (strain ATCC 25618 / H37Rv).